Reading from the N-terminus, the 863-residue chain is MQELYNPSEIEALVQKHWHEHKTFEVTEDESKEKFYCLSMFPYPSGRLHMGHVRNYTIGDVVARYQRLQGKNVLQPIGWDSFGLPAENAAINNKASPAPWTYENIDYMKNQLKLLGFGYDWSREIATCTPEYYRWEQWFFTQLYAKGLVYKKTSSVNWCPNDETVLANEQVQDGCCWRCDTEVIQKEIPQWFIKITDYAEELLNDIDTLDGWPEQVKAMQRNWIGRSEGIEMTFAVADSDASFDIYTTRPDTLMGVTYVAIAAGHPLAEQSAQNNPELAAFLEECKNADTTEAAMASMEKKGVATGLQAIHPISGKLVPIWVANFVLMNYGTGAVMSVPAHDQRDYEFATKYQLAIEAVIKPVDGEVDVSKEAYTEKGVVFNSGDAFPELDGLDFQAAFEAIDARLTAEGKGKRQVNYRLRDWGVSRQRYWGAPIPMVTLADGTVVPTPEDQLPVILPEDVVMDGIQSPIKADKAWAETTVNGQPATRETDTFDTFMESSWYYARYCSPHADEMLDPAKANYWLPVDQYIGGIEHACMHLLYFRFFHKLLRDAGLVNSDEPAKQLLTQGMVLADAYYYTNEKGARVWVSPLEVTVVEKDDKGRIIKAIDNQGHELVYTGMSKMSKSKNNGIDPQVMVEKYGADTVRLFMMFASPPELTLEWQESGVEGAHRFIKRFWKLASDHVAAGKTEALDTSKLNADQKALRRELHKTIAKVSDDIARRQMFNTAVASVMELMNHLLKASQETAQDRALLAEALSAVTRLLYPIVPHMTFTLWNELGNEGDIEDSRWPEVDESALVEDSKLIVVQVNGKVRAKITVAADASKEDVEALGMSDEHVQKHTEGLTVRKVIYVPGKLLSIVAN.

Positions proline 42–histidine 52 match the 'HIGH' region motif. The short motif at lysine 622–serine 626 is the 'KMSKS' region element. Lysine 625 contacts ATP.

This sequence belongs to the class-I aminoacyl-tRNA synthetase family.

The protein localises to the cytoplasm. It catalyses the reaction tRNA(Leu) + L-leucine + ATP = L-leucyl-tRNA(Leu) + AMP + diphosphate. The sequence is that of Leucine--tRNA ligase from Shewanella frigidimarina (strain NCIMB 400).